A 1101-amino-acid polypeptide reads, in one-letter code: Nuclear pore complex protein NUP107 (1101 aa).

Belongs to the nucleoporin Nup84/Nup107 family. In terms of assembly, part of the nuclear pore complex (NPC). The NPC has an eight-fold symmetrical structure comprising a central transport channel and two rings, the cytoplasmic and nuclear rings, to which eight filaments are attached. The cytoplasmic filaments have loose ends, while the nuclear filaments are joined in a distal ring, forming a nuclear basket. NPCs are highly dynamic in configuration and composition, and can be devided in 3 subcomplexes, the NUP62 subcomplex, the NUP107-160 subcomplex and the NUP93 subcomplex, containing approximately 30 different nucleoporin proteins.

It localises to the nucleus envelope. The protein resides in the nucleus. It is found in the nuclear pore complex. This chain is Nuclear pore complex protein NUP107, found in Arabidopsis thaliana (Mouse-ear cress).